The primary structure comprises 117 residues: Large ribosomal subunit protein bL19 (117 aa).

This sequence belongs to the bacterial ribosomal protein bL19 family.

Functionally, this protein is located at the 30S-50S ribosomal subunit interface and may play a role in the structure and function of the aminoacyl-tRNA binding site. The protein is Large ribosomal subunit protein bL19 of Exiguobacterium sp. (strain ATCC BAA-1283 / AT1b).